We begin with the raw amino-acid sequence, 273 residues long: DnaJ homolog subfamily C member 27 (273 aa).

A required for interaction with MAPK1 region spans residues 1 to 18 (METNVPKRKEPAKSLRIK). GTP is bound by residues 23–30 (GNAEVGKS), 71–75 (DMAGH), and 134–137 (NKID). In terms of domain architecture, J spans 217–273 (DSWEMLGVRPGASREEVNKAYRKLAVLLHPDKCVAPGSEDAFKAVVNARTALLKNIK).

Belongs to the small GTPase superfamily. Rab family. As to quaternary structure, interacts directly with MAPK1 (wild-type and kinase-deficient forms). Interacts directly (in GTP-bound form) with MAP2K1 (wild-type and kinase-deficient forms).

The protein localises to the nucleus. GTPase which can activate the MEK/ERK pathway and induce cell transformation when overexpressed. May act as a nuclear scaffold for MAPK1, probably by association with MAPK1 nuclear export signal leading to enhanced ERK1/ERK2 signaling. The polypeptide is DnaJ homolog subfamily C member 27 (Dnajc27) (Mus musculus (Mouse)).